Reading from the N-terminus, the 356-residue chain is Phosphate acyltransferase (356 aa).

Belongs to the PlsX family. In terms of assembly, homodimer. Probably interacts with PlsY.

It localises to the cytoplasm. It catalyses the reaction a fatty acyl-[ACP] + phosphate = an acyl phosphate + holo-[ACP]. The protein operates within lipid metabolism; phospholipid metabolism. Functionally, catalyzes the reversible formation of acyl-phosphate (acyl-PO(4)) from acyl-[acyl-carrier-protein] (acyl-ACP). This enzyme utilizes acyl-ACP as fatty acyl donor, but not acyl-CoA. The polypeptide is Phosphate acyltransferase (Shigella boydii serotype 4 (strain Sb227)).